Consider the following 190-residue polypeptide: Lipocalin Can f 6.0101 (190 aa).

An N-terminal signal peptide occupies residues 1-15; it reads MKLLLLCLGLILVHA. The segment at 43-54 is igE-binding; that stretch reads SDIKEKIEENGS. Residues Asn-52 and Asn-67 are each glycosylated (N-linked (GlcNAc...) asparagine). The segment at 76 to 83 is igE-binding; it reads TKVNGKCT. An intrachain disulfide couples Cys-82 to Cys-175. N-linked (GlcNAc...) asparagine glycosylation occurs at Asn-90. The interval 91 to 97 is igE-binding; the sequence is KTEKDGE. A no IgE-binding region spans residues 100–109; the sequence is VVHDGYNLFR. IgE-binding stretches follow at residues 125–132 and 139–152; these read NVNQEQEF and GRKPDVSPKVKEKF.

The protein belongs to the calycin superfamily. Lipocalin family. As to quaternary structure, monomer. Expressed in saliva (at protein level). Expressed in dander (at protein level). According to PubMed:22104604, expressed in submaxillary gland. In contrast, according to PubMed:22515174, not expressed in submaxillary gland. Expressed in bladder and skin, but not in tongue.

Its subcellular location is the secreted. The sequence is that of Lipocalin Can f 6.0101 from Canis lupus familiaris (Dog).